Consider the following 361-residue polypeptide: Phosphoserine aminotransferase (361 aa).

Arginine 43 contributes to the L-glutamate binding site. Residues 77–78, tryptophan 103, threonine 152, aspartate 172, and glutamine 195 each bind pyridoxal 5'-phosphate; that span reads AS. N6-(pyridoxal phosphate)lysine is present on lysine 196. A pyridoxal 5'-phosphate-binding site is contributed by 237–238; the sequence is NT.

This sequence belongs to the class-V pyridoxal-phosphate-dependent aminotransferase family. SerC subfamily. In terms of assembly, homodimer. It depends on pyridoxal 5'-phosphate as a cofactor.

It is found in the cytoplasm. The enzyme catalyses O-phospho-L-serine + 2-oxoglutarate = 3-phosphooxypyruvate + L-glutamate. It catalyses the reaction 4-(phosphooxy)-L-threonine + 2-oxoglutarate = (R)-3-hydroxy-2-oxo-4-phosphooxybutanoate + L-glutamate. The protein operates within amino-acid biosynthesis; L-serine biosynthesis; L-serine from 3-phospho-D-glycerate: step 2/3. It functions in the pathway cofactor biosynthesis; pyridoxine 5'-phosphate biosynthesis; pyridoxine 5'-phosphate from D-erythrose 4-phosphate: step 3/5. Its function is as follows. Catalyzes the reversible conversion of 3-phosphohydroxypyruvate to phosphoserine and of 3-hydroxy-2-oxo-4-phosphonooxybutanoate to phosphohydroxythreonine. The sequence is that of Phosphoserine aminotransferase from Desulfosudis oleivorans (strain DSM 6200 / JCM 39069 / Hxd3) (Desulfococcus oleovorans).